The chain runs to 199 residues: Cytochrome c oxidase subunit 2 (199 aa).

A helical membrane pass occupies residues 1–13; that stretch reads AICSLVLYLLTLM. At 14 to 26 the chain is on the mitochondrial matrix side; the sequence is LMEKLSSNSVDAQ. A helical membrane pass occupies residues 27–54; it reads EVELVWTILPAIVLILLALPSLQILYMM. Over 55–199 the chain is Mitochondrial intermembrane; that stretch reads DEIDEPDLTL…SSLLSTSSSL (145 aa). Residues histidine 128, cysteine 163, glutamate 165, cysteine 167, histidine 171, and methionine 174 each coordinate Cu cation. Residue glutamate 165 coordinates Mg(2+).

It belongs to the cytochrome c oxidase subunit 2 family. In terms of assembly, component of the cytochrome c oxidase (complex IV, CIV), a multisubunit enzyme composed of 14 subunits. The complex is composed of a catalytic core of 3 subunits MT-CO1, MT-CO2 and MT-CO3, encoded in the mitochondrial DNA, and 11 supernumerary subunits COX4I, COX5A, COX5B, COX6A, COX6B, COX6C, COX7A, COX7B, COX7C, COX8 and NDUFA4, which are encoded in the nuclear genome. The complex exists as a monomer or a dimer and forms supercomplexes (SCs) in the inner mitochondrial membrane with NADH-ubiquinone oxidoreductase (complex I, CI) and ubiquinol-cytochrome c oxidoreductase (cytochrome b-c1 complex, complex III, CIII), resulting in different assemblies (supercomplex SCI(1)III(2)IV(1) and megacomplex MCI(2)III(2)IV(2)). Found in a complex with TMEM177, COA6, COX18, COX20, SCO1 and SCO2. Interacts with TMEM177 in a COX20-dependent manner. Interacts with COX20. Interacts with COX16. Requires Cu cation as cofactor.

It localises to the mitochondrion inner membrane. The catalysed reaction is 4 Fe(II)-[cytochrome c] + O2 + 8 H(+)(in) = 4 Fe(III)-[cytochrome c] + 2 H2O + 4 H(+)(out). Its function is as follows. Component of the cytochrome c oxidase, the last enzyme in the mitochondrial electron transport chain which drives oxidative phosphorylation. The respiratory chain contains 3 multisubunit complexes succinate dehydrogenase (complex II, CII), ubiquinol-cytochrome c oxidoreductase (cytochrome b-c1 complex, complex III, CIII) and cytochrome c oxidase (complex IV, CIV), that cooperate to transfer electrons derived from NADH and succinate to molecular oxygen, creating an electrochemical gradient over the inner membrane that drives transmembrane transport and the ATP synthase. Cytochrome c oxidase is the component of the respiratory chain that catalyzes the reduction of oxygen to water. Electrons originating from reduced cytochrome c in the intermembrane space (IMS) are transferred via the dinuclear copper A center (CU(A)) of subunit 2 and heme A of subunit 1 to the active site in subunit 1, a binuclear center (BNC) formed by heme A3 and copper B (CU(B)). The BNC reduces molecular oxygen to 2 water molecules using 4 electrons from cytochrome c in the IMS and 4 protons from the mitochondrial matrix. This Apteryx australis (Southern brown kiwi) protein is Cytochrome c oxidase subunit 2 (MT-CO2).